The primary structure comprises 246 residues: 3-deoxy-manno-octulosonate cytidylyltransferase (246 aa).

It belongs to the KdsB family.

It is found in the cytoplasm. The enzyme catalyses 3-deoxy-alpha-D-manno-oct-2-ulosonate + CTP = CMP-3-deoxy-beta-D-manno-octulosonate + diphosphate. It functions in the pathway nucleotide-sugar biosynthesis; CMP-3-deoxy-D-manno-octulosonate biosynthesis; CMP-3-deoxy-D-manno-octulosonate from 3-deoxy-D-manno-octulosonate and CTP: step 1/1. Its pathway is bacterial outer membrane biogenesis; lipopolysaccharide biosynthesis. In terms of biological role, activates KDO (a required 8-carbon sugar) for incorporation into bacterial lipopolysaccharide in Gram-negative bacteria. The protein is 3-deoxy-manno-octulosonate cytidylyltransferase of Myxococcus xanthus (strain DK1622).